Reading from the N-terminus, the 343-residue chain is Galactoside alpha-(1,2)-fucosyltransferase 2 (343 aa).

Residues 1–14 (MLVVQMPFSFPMAH) lie on the Cytoplasmic side of the membrane. The helical; Signal-anchor for type II membrane protein transmembrane segment at 15 to 28 (FILFVFTVSTIFHV) threads the bilayer. The Lumenal portion of the chain corresponds to 29–343 (QQRLAKIQAM…AADLSPLLKH (315 aa)). 3 N-linked (GlcNAc...) asparagine glycosylation sites follow: asparagine 188, asparagine 282, and asparagine 308.

Belongs to the glycosyltransferase 11 family.

Its subcellular location is the golgi apparatus. It is found in the golgi stack membrane. It carries out the reaction a beta-D-galactosyl-(1-&gt;3)-N-acetyl-beta-D-glucosaminyl derivative + GDP-beta-L-fucose = an alpha-L-Fuc-(1-&gt;2)-beta-D-Gal-(1-&gt;3)-beta-D-GlcNAc derivative + GDP + H(+). It catalyses the reaction a beta-D-galactosyl-(1-&gt;4)-N-acetyl-beta-D-glucosaminyl derivative + GDP-beta-L-fucose = an alpha-L-Fuc-(1-&gt;2)-beta-D-Gal-(1-&gt;4)-beta-D-GlcNAc derivative + GDP + H(+). The enzyme catalyses a neolactoside nLc4Cer + GDP-beta-L-fucose = a neolactoside IV(2)-alpha-Fuc-nLc4Cer + GDP + H(+). The catalysed reaction is a neolactoside nLc4Cer(d18:1(4E)) + GDP-beta-L-fucose = a neolactoside IV(2)-alpha-Fuc-nLc4Cer(d18:1(4E)) + GDP + H(+). It carries out the reaction a ganglioside GM1 + GDP-beta-L-fucose = a ganglioside Fuc-GM1 + GDP + H(+). It catalyses the reaction a ganglioside GA1 + GDP-beta-L-fucose = a ganglioside Fuc-GA1 + GDP + H(+). The enzyme catalyses Lc4Cer + GDP-beta-L-fucose = alpha-L-fucosyl-(1-&gt;2)-beta-D-galactosyl-(1-&gt;3)-N-acetyl-beta-D-glucosaminyl-(1-&gt;3)-beta-D-galactosyl-(1-&gt;4)-beta-D-glucosyl-(1&lt;-&gt;1')-ceramide + GDP + H(+). The catalysed reaction is a beta-D-Gal-(1-&gt;3)-beta-D-GlcNAc-(1-&gt;3)-beta-D-Gal-(1-&gt;4)-beta-D-Glc-(1&lt;-&gt;1')-Cer(d18:1(4E)) + GDP-beta-L-fucose = alpha-L-fucosyl-(1-&gt;2)- beta-D-galactosyl-(1-&gt;3)-N-acetyl-beta-D-glucosaminyl-(1-&gt;3)-beta-D-galactosyl-(1-&gt;4)-beta-D-glucosyl-(1&lt;-&gt;1')-N-acylsphing-4-enine + GDP + H(+). It carries out the reaction a ganglioside GD1b + GDP-beta-L-fucose = a ganglioside Fuc-GD1b + GDP + H(+). It catalyses the reaction a ganglioside GM1 (d18:1(4E)) + GDP-beta-L-fucose = a ganglioside Fuc-GM1 (d18:1(4E)) + GDP + H(+). The enzyme catalyses a globoside GalGb4Cer (d18:1(4E)) + GDP-beta-L-fucose = a globoside Globo-H (d18:1(4E)) + GDP + H(+). The catalysed reaction is a lactoside III(4)-a-Fuc-Lc4Cer + GDP-beta-L-fucose = a lactoside IV(2),III(4)-a-[Fuc]2-Lc4Cer + GDP + H(+). It carries out the reaction beta-D-galactosyl-(1-&gt;3)-N-acetyl-D-galactosamine + GDP-beta-L-fucose = alpha-L-fucosyl-(1-&gt;2)-beta-D-galactosyl-(1-&gt;3)-N-acetyl-D-galactosamine + GDP + H(+). Its pathway is protein modification; protein glycosylation. In terms of biological role, catalyzes the transfer of L-fucose, from a guanosine diphosphate-beta-L-fucose, to the terminal galactose on both O- and N-linked glycans chains of cell surface glycoproteins and glycolipids and the resulting epitope regulates several processes such as cell-cell interaction including host-microbe interaction, cell surface expression and cell proliferation. Preferentially fucosylates gangliosides GA1 and GM1 in the antrum, cecum and colon and in the female reproductive organs. Fucosylated host glycoproteins or glycolipids mediate interaction with intestinal microbiota influencing its composition. Creates a soluble precursor oligosaccharide FuC-alpha ((1,2)Galbeta-) called the H antigen which is an essential substrate for the final step in the soluble ABO blood group antigen synthesis pathway. The sequence is that of Galactoside alpha-(1,2)-fucosyltransferase 2 from Gorilla gorilla gorilla (Western lowland gorilla).